Consider the following 421-residue polypeptide: F-box only protein 9 (421 aa).

Residues 1 to 63 (MAESNQNTDG…AELRRRQETA (63 aa)) form a disordered region. Residues 11–20 (AVEEGEDENT) are compositionally biased toward acidic residues. Residues 40 to 52 (LQPSSGGQRSFSR) are compositionally biased toward polar residues. Over residues 54–63 (AELRRRQETA) the composition is skewed to basic and acidic residues. The TPR repeat unit spans residues 68–101 (ARELFLKAVEEEQNGAVYEAIKYYKSAMQLVPDI). The F-box domain maps to 158–209 (QVHISALPFEVLMYIFRWVVSCDLDLRALEQLSLVCRGFYICARDPEIWRSA).

As to quaternary structure, part of the SCF (SKP1-CUL1-F-box) E3 ubiquitin-protein ligase complex SCF(fbxo9).

It is found in the cytoplasm. The protein operates within protein modification; protein ubiquitination. In terms of biological role, substrate recognition component of a SCF (SKP1-CUL1-F-box protein) E3 ubiquitin-protein ligase complex which mediates the ubiquitination and subsequent proteasomal degradation of target proteins and acts as a regulator of mTOR signaling. In Danio rerio (Zebrafish), this protein is F-box only protein 9 (fbxo9).